The primary structure comprises 46 residues: Spectrin alpha chain, non-erythrocytic 1 (46 aa).

6 Spectrin repeats span residues 1–5, 7–14, 15–20, 21–26, 27–35, and 39–46; these read AQLAD, FHLQQFFR, SQLLGS, AHEVQR, LAQFVEHWK, and DLFLTFAK.

This sequence belongs to the spectrin family. In terms of assembly, associates with the gamma-tubulin complex in brain, but not in kidney, liver, sperm, or uterus. Like erythrocyte spectrin, the spectrin-like proteins are capable of forming dimers which can further associate to tetramers. Interacts with isoform 1 of ACP1. Interacts with CALM and EMD. Interacts (via C-terminal spectrin repeats) with TRPC4. Identified in a complex with ACTN4, CASK, IQGAP1, MAGI2, NPHS1 and SPTBN1. Interacts with CLN3; this interaction regulates the fodrin localization at the plasma membrane.

Its subcellular location is the cytoplasm. It localises to the cytoskeleton. The protein resides in the cell cortex. Fodrin, which seems to be involved in secretion, interacts with calmodulin in a calcium-dependent manner and is thus candidate for the calcium-dependent movement of the cytoskeleton at the membrane. This Capra hircus (Goat) protein is Spectrin alpha chain, non-erythrocytic 1 (SPTAN1).